We begin with the raw amino-acid sequence, 311 residues long: HPr kinase/phosphorylase (311 aa).

Catalysis depends on residues histidine 138 and lysine 159. Position 153–160 (153–160 (GSSGIGKS)) interacts with ATP. Serine 160 serves as a coordination point for Mg(2+). The Proton acceptor; for phosphorylation activity. Proton donor; for dephosphorylation activity role is filled by aspartate 177. The tract at residues 201-210 (LEIRGVGIIN) is important for the catalytic mechanism of both phosphorylation and dephosphorylation. Residue glutamate 202 participates in Mg(2+) binding. Arginine 243 is an active-site residue. The interval 264 to 269 (PVRPGR) is important for the catalytic mechanism of dephosphorylation.

Belongs to the HPrK/P family. Homohexamer. Requires Mg(2+) as cofactor.

It catalyses the reaction [HPr protein]-L-serine + ATP = [HPr protein]-O-phospho-L-serine + ADP + H(+). It carries out the reaction [HPr protein]-O-phospho-L-serine + phosphate + H(+) = [HPr protein]-L-serine + diphosphate. Functionally, catalyzes the ATP- as well as the pyrophosphate-dependent phosphorylation of a specific serine residue in HPr, a phosphocarrier protein of the phosphoenolpyruvate-dependent sugar phosphotransferase system (PTS). HprK/P also catalyzes the pyrophosphate-producing, inorganic phosphate-dependent dephosphorylation (phosphorolysis) of seryl-phosphorylated HPr (P-Ser-HPr). The two antagonistic activities of HprK/P are regulated by several intracellular metabolites, which change their concentration in response to the absence or presence of rapidly metabolisable carbon sources (glucose, fructose, etc.) in the growth medium. Therefore, by controlling the phosphorylation state of HPr, HPrK/P is a sensor enzyme that plays a major role in the regulation of carbon metabolism and sugar transport: it mediates carbon catabolite repression (CCR), and regulates PTS-catalyzed carbohydrate uptake and inducer exclusion. The sequence is that of HPr kinase/phosphorylase from Brevibacillus brevis (strain 47 / JCM 6285 / NBRC 100599).